A 24-amino-acid chain; its full sequence is Brevinin-1Ecb (24 aa).

A disulfide bond links C18 and C24.

As to expression, expressed by the skin glands.

It localises to the secreted. Functionally, shows antibacterial activity against representative Gram-negative and Gram-positive bacterial species, and hemolytic activity. This chain is Brevinin-1Ecb, found in Pelophylax ridibundus (Marsh frog).